The primary structure comprises 1643 residues: Lysine-specific demethylase 6B (1643 aa).

4 disordered regions span residues Gly-52–Gly-88, Ala-190–Asp-680, Glu-704–Leu-807, and Gly-822–Ser-1096. 2 stretches are compositionally biased toward low complexity: residues Ser-63–Pro-74 and Ala-212–Leu-223. At Ser-224 the chain carries Phosphoserine. Residues Pro-242 to Pro-266 show a composition bias toward pro residues. Residues Gly-291–His-307 are compositionally biased toward basic and acidic residues. Residues Ala-332 to Pro-342 are compositionally biased toward pro residues. Residues Asp-359–Met-370 are compositionally biased toward basic and acidic residues. The segment covering Pro-394–Gly-412 has biased composition (low complexity). Residues Ser-460 to Ala-484 are compositionally biased toward pro residues. The span at Thr-550–Val-569 shows a compositional bias: low complexity. Composition is skewed to pro residues over residues Leu-584–Val-600 and Gly-641–Pro-658. Over residues Glu-704–Gln-714 the composition is skewed to basic and acidic residues. Positions Thr-740 to Thr-764 are enriched in low complexity. The segment covering Pro-772–Pro-800 has biased composition (pro residues). Residues Ser-843–Pro-877 show a composition bias toward low complexity. Residues Val-889–Leu-904 show a composition bias toward pro residues. Basic and acidic residues predominate over residues Glu-916 to Gly-929. Residues Cys-972–Ala-989 show a composition bias toward basic residues. Basic and acidic residues predominate over residues Cys-990–Ala-1003. The segment covering Lys-1004 to Arg-1016 has biased composition (basic residues). Residues Pro-1047–Ala-1067 show a composition bias toward pro residues. A Glycyl lysine isopeptide (Lys-Gly) (interchain with G-Cter in SUMO2) cross-link involves residue Lys-1109. The segment at Phe-1288–Ile-1325 is disordered. Over residues Lys-1296–Asp-1307 the composition is skewed to acidic residues. Residues Arg-1339 to Trp-1502 form the JmjC domain. Fe cation-binding residues include His-1390, Glu-1392, and His-1470. Cys-1575, Cys-1578, Cys-1602, and Cys-1605 together coordinate Zn(2+).

It belongs to the UTX family. As to quaternary structure, interacts with TLE1. Component of the MLL4 complex, at least composed of KMT2B/MLL4, ASH2L, RBBP5, WDR5, and KDM6B. Interacts with TBX21, SMARCA4, SMARCC1 and SMARCC2. The cofactor is L-ascorbate. Requires Fe(2+) as cofactor.

It localises to the nucleus. The catalysed reaction is N(6),N(6),N(6)-trimethyl-L-lysyl(27)-[histone H3] + 2 2-oxoglutarate + 2 O2 = N(6)-methyl-L-lysyl(27)-[histone H3] + 2 formaldehyde + 2 succinate + 2 CO2. Histone demethylase that specifically demethylates 'Lys-27' of histone H3, thereby playing a central role in histone code. Demethylates trimethylated and dimethylated H3 'Lys-27'. Plays a central role in regulation of posterior development, by regulating HOX gene expression. Involved in inflammatory response by participating in macrophage differentiation in case of inflammation by regulating gene expression and macrophage differentiation. Plays a demethylase-independent role in chromatin remodeling to regulate T-box family member-dependent gene expression by acting as a link between T-box factors and the SMARCA4-containing SWI/SNF remodeling complex. The sequence is that of Lysine-specific demethylase 6B (KDM6B) from Homo sapiens (Human).